The primary structure comprises 292 residues: Phosphatidylglycerol--prolipoprotein diacylglyceryl transferase (292 aa).

The next 4 membrane-spanning stretches (helical) occupy residues 18–38, 67–87, 105–125, and 129–149; these read LFGA…GLLI, LLTW…VLFY, GGMS…AFCL, and ISIL…LFLG. Arg-150 contributes to the a 1,2-diacyl-sn-glycero-3-phospho-(1'-sn-glycerol) binding site. 3 consecutive transmembrane segments (helical) span residues 193-213, 222-242, and 266-286; these read QLYE…ILIW, GAVT…VEFV, and GLTM…YFML.

The protein belongs to the Lgt family.

The protein resides in the cell inner membrane. The catalysed reaction is L-cysteinyl-[prolipoprotein] + a 1,2-diacyl-sn-glycero-3-phospho-(1'-sn-glycerol) = an S-1,2-diacyl-sn-glyceryl-L-cysteinyl-[prolipoprotein] + sn-glycerol 1-phosphate + H(+). The protein operates within protein modification; lipoprotein biosynthesis (diacylglyceryl transfer). In terms of biological role, catalyzes the transfer of the diacylglyceryl group from phosphatidylglycerol to the sulfhydryl group of the N-terminal cysteine of a prolipoprotein, the first step in the formation of mature lipoproteins. This Cereibacter sphaeroides (strain ATCC 17025 / ATH 2.4.3) (Rhodobacter sphaeroides) protein is Phosphatidylglycerol--prolipoprotein diacylglyceryl transferase.